The primary structure comprises 360 residues: Phospho-N-acetylmuramoyl-pentapeptide-transferase (360 aa).

10 helical membrane passes run 21-41, 73-93, 94-114, 132-152, 168-188, 199-219, 239-259, 263-283, 288-308, and 338-358; these read YITVRANLALLTALFISLWIG, TMGGVMILFSIGVSTLLWANL, ANPYIWVCLFVLFGYGAIGFV, WKYFWMSVVALVAILWLYWLG, IMPQLGLFYIVLSYFVIVGTG, GLAIMPTALVAGAFALIAWAT, VVVFCTAIVGASLGFLWFNTY, VFMGDVGSLALGGALGVVAIL, FLLVIMGGVFVVEALSVILQV, and VIIRFWIISLMLVLMGLVTLK.

The protein belongs to the glycosyltransferase 4 family. MraY subfamily. Mg(2+) is required as a cofactor.

The protein resides in the cell inner membrane. It carries out the reaction UDP-N-acetyl-alpha-D-muramoyl-L-alanyl-gamma-D-glutamyl-meso-2,6-diaminopimeloyl-D-alanyl-D-alanine + di-trans,octa-cis-undecaprenyl phosphate = di-trans,octa-cis-undecaprenyl diphospho-N-acetyl-alpha-D-muramoyl-L-alanyl-D-glutamyl-meso-2,6-diaminopimeloyl-D-alanyl-D-alanine + UMP. The protein operates within cell wall biogenesis; peptidoglycan biosynthesis. Catalyzes the initial step of the lipid cycle reactions in the biosynthesis of the cell wall peptidoglycan: transfers peptidoglycan precursor phospho-MurNAc-pentapeptide from UDP-MurNAc-pentapeptide onto the lipid carrier undecaprenyl phosphate, yielding undecaprenyl-pyrophosphoryl-MurNAc-pentapeptide, known as lipid I. This Haemophilus influenzae (strain ATCC 51907 / DSM 11121 / KW20 / Rd) protein is Phospho-N-acetylmuramoyl-pentapeptide-transferase.